Here is a 146-residue protein sequence, read N- to C-terminus: Large ribosomal subunit protein uL13 (146 aa).

This sequence belongs to the universal ribosomal protein uL13 family. In terms of assembly, part of the 50S ribosomal subunit.

Functionally, this protein is one of the early assembly proteins of the 50S ribosomal subunit, although it is not seen to bind rRNA by itself. It is important during the early stages of 50S assembly. The polypeptide is Large ribosomal subunit protein uL13 (Bdellovibrio bacteriovorus (strain ATCC 15356 / DSM 50701 / NCIMB 9529 / HD100)).